A 189-amino-acid polypeptide reads, in one-letter code: Chitin synthase 2 (189 aa).

The protein belongs to the chitin synthase family. Class II subfamily.

It localises to the cell membrane. The enzyme catalyses [(1-&gt;4)-N-acetyl-beta-D-glucosaminyl](n) + UDP-N-acetyl-alpha-D-glucosamine = [(1-&gt;4)-N-acetyl-beta-D-glucosaminyl](n+1) + UDP + H(+). Its function is as follows. Polymerizes chitin, a structural polymer of the cell wall and septum, by transferring the sugar moiety of UDP-GlcNAc to the non-reducing end of the growing chitin polymer. The chain is Chitin synthase 2 (CHS2) from Xylohypha bantiana.